A 499-amino-acid chain; its full sequence is Putative antiporter subunit mnhD2 (499 aa).

The next 14 membrane-spanning stretches (helical) occupy residues 3-23 (SNLLVLPILLPLLCALVLVFT), 32-52 (ILYIGTMSVNTVISLCLLIYV), 78-98 (LSLVMVTVASFVVTLIMSYGF), 108-128 (YYLPTFILFLTTGVIGSFLTS), 130-150 (LFNLYVMFEIMLLASFVLVTL), 161-181 (IIYVVLNIVGSWLFLLGIGLL), 206-226 (IIIISIVFIVAFGSKAALVLF), 240-260 (LAALFAALMTKVGAYALIRFF), 273-293 (PLLVFMSCITMLIGAFGVIAY), 308-328 (IGFVILGLGSNTFAGVHGAIF), 330-350 (LANDIIVKTMLFFIIGSLVYM), 368-388 (FFGVAFVVMIFAIGGVPPFSG), 403-423 (GNFIGLALMIITSLLAMYSLF), and 450-470 (TILGILVAVVLAMGIAAPVVM).

The protein belongs to the CPA3 antiporters (TC 2.A.63) subunit D family. In terms of assembly, may form a heterooligomeric complex that consists of seven subunits: mnhA2, mnhB2, mnhC2, mnhD2, mnhE2, mnhF2 and mnhG2.

It is found in the cell membrane. This is Putative antiporter subunit mnhD2 (mnhD2) from Staphylococcus haemolyticus (strain JCSC1435).